We begin with the raw amino-acid sequence, 90 residues long: U7-theraphotoxin-Hhn1a 3 (90 aa).

The first 26 residues, 1–26, serve as a signal peptide directing secretion; sequence MKTAIFTVVLALAVFAVLSFGWEANG. Residues 27–50 constitute a propeptide that is removed on maturation; the sequence is KALSEEFTELIHEKEAASETEARE. Cystine bridges form between Cys51–Cys65, Cys58–Cys70, and Cys64–Cys81.

Belongs to the neurotoxin 10 (Hwtx-1) family. 13 (Hntx-13) subfamily. Expressed by the venom gland.

It localises to the secreted. In terms of biological role, ion channel inhibitor. In Cyriopagopus hainanus (Chinese bird spider), this protein is U7-theraphotoxin-Hhn1a 3.